A 152-amino-acid polypeptide reads, in one-letter code: Xanthine-guanine phosphoribosyltransferase (152 aa).

5-phospho-alpha-D-ribose 1-diphosphate is bound by residues 37-38, Arg69, and 88-96; these read RG and DDLVDTGVT. Arg69 contacts GMP. A Mg(2+)-binding site is contributed by Asp89. Guanine is bound by residues Asp92 and Ile135. Asp92 and Ile135 together coordinate xanthine. GMP contacts are provided by residues 92–96 and 134–135; these read DTGVT and WI.

Belongs to the purine/pyrimidine phosphoribosyltransferase family. XGPT subfamily. Homotetramer. Mg(2+) serves as cofactor.

Its subcellular location is the cell inner membrane. It carries out the reaction GMP + diphosphate = guanine + 5-phospho-alpha-D-ribose 1-diphosphate. The catalysed reaction is XMP + diphosphate = xanthine + 5-phospho-alpha-D-ribose 1-diphosphate. The enzyme catalyses IMP + diphosphate = hypoxanthine + 5-phospho-alpha-D-ribose 1-diphosphate. The protein operates within purine metabolism; GMP biosynthesis via salvage pathway; GMP from guanine: step 1/1. It participates in purine metabolism; XMP biosynthesis via salvage pathway; XMP from xanthine: step 1/1. Its function is as follows. Purine salvage pathway enzyme that catalyzes the transfer of the ribosyl-5-phosphate group from 5-phospho-alpha-D-ribose 1-diphosphate (PRPP) to the N9 position of the 6-oxopurines guanine and xanthine to form the corresponding ribonucleotides GMP (guanosine 5'-monophosphate) and XMP (xanthosine 5'-monophosphate), with the release of PPi. To a lesser extent, also acts on hypoxanthine. The protein is Xanthine-guanine phosphoribosyltransferase of Sodalis glossinidius (strain morsitans).